Reading from the N-terminus, the 260-residue chain is Indole-3-glycerol phosphate synthase (260 aa).

It belongs to the TrpC family.

It carries out the reaction 1-(2-carboxyphenylamino)-1-deoxy-D-ribulose 5-phosphate + H(+) = (1S,2R)-1-C-(indol-3-yl)glycerol 3-phosphate + CO2 + H2O. The protein operates within amino-acid biosynthesis; L-tryptophan biosynthesis; L-tryptophan from chorismate: step 4/5. In Lactiplantibacillus plantarum (strain ATCC BAA-793 / NCIMB 8826 / WCFS1) (Lactobacillus plantarum), this protein is Indole-3-glycerol phosphate synthase.